The sequence spans 465 residues: Tubulin gamma chain (465 aa).

144 to 150 (AGGTGSG) provides a ligand contact to GTP.

This sequence belongs to the tubulin family.

The protein localises to the cytoplasm. It is found in the cytoskeleton. It localises to the microtubule organizing center. The protein resides in the spindle pole body. Functionally, tubulin is the major constituent of microtubules. The gamma chain is found at microtubule organizing centers (MTOC) such as the spindle poles or the centrosome, suggesting that it is involved in the minus-end nucleation of microtubule assembly. This chain is Tubulin gamma chain (TUB4), found in Candida glabrata (strain ATCC 2001 / BCRC 20586 / JCM 3761 / NBRC 0622 / NRRL Y-65 / CBS 138) (Yeast).